We begin with the raw amino-acid sequence, 465 residues long: MSRPIEWSPENGAAVCLVEEYNYPMAIRCYKCNVLFDITGLPYTVDAFIEKHDSITSGMEGNQCRIKDLGDDWKKGLFSNFFFKTELSDTEEKITCTNCVWSRNVLKNSYYTRGMIKYAHDNESPACIIKNTEEMKTSDSWQYGNSCDVNFMQMETPFKKFTNKSVICSSCMTIIAGRDEHPTFGGFVNSHFINNPHCKDMDFLKNLSIDSRRIVVIANLDDFPDYNSDTSSSEGESSVGDEITYYNADEFTEMFGDDSDDDSDDEGIEDLSAYDEAMSVNDVDYKDVKERECSFSTWPKQMKQDSKEMAEAGWYYTGKSDRVRCFHCGITFGGWMPDDDPWSIHKLMEKETCGWLEFNPDKIPKVLRYIDDEGGEDKEEDGGGGGVIEFPKNNKEVENPKRGSCKACYERKADIAFIPCGHVFSCNICTMEMFASYKKKKRCPMCRVHVEKVQKIFLDEDEDMA.

Residues 291-357 (RECSFSTWPK…MEKETCGWLE (67 aa)) form a BIR repeat. Residues 373–382 (EGGEDKEEDG) are compositionally biased toward acidic residues. The interval 373 to 393 (EGGEDKEEDGGGGGVIEFPKN) is disordered. The RING-type zinc-finger motif lies at 405 to 447 (CKACYERKADIAFIPCGHVFSCNICTMEMFASYKKKKRCPMCR).

The polypeptide is Putative apoptosis inhibitor ORF106 (Magallana gigas (Pacific oyster)).